We begin with the raw amino-acid sequence, 398 residues long: ATP-dependent RNA helicase eIF4A (398 aa).

The Q motif signature appears at 25–53 (DSFDTMNLKPELLRGVYAYGFERPSAIQQ). One can recognise a Helicase ATP-binding domain in the interval 56–226 (IMPVIKGHDV…TKFMRDPVRI (171 aa)). Residue 69–76 (AQSGTGKT) participates in ATP binding. The short motif at 174 to 177 (DEAD) is the DEAD box element. Positions 237-398 (GIKQFYIAVE…EMPMNVADLI (162 aa)) constitute a Helicase C-terminal domain.

It belongs to the DEAD box helicase family. eIF4A subfamily. In terms of assembly, component of the eIF4F complex, which composition varies with external and internal environmental conditions. It is composed of at least eIF4A, eIF4E and eIF4G.

The protein resides in the cytoplasm. The enzyme catalyses ATP + H2O = ADP + phosphate + H(+). Its function is as follows. ATP-dependent RNA helicase which is a subunit of the eIF4F complex involved in cap recognition and is required for mRNA binding to ribosome. In the current model of translation initiation, eIF4A unwinds RNA secondary structures in the 5'-UTR of mRNAs which is necessary to allow efficient binding of the small ribosomal subunit, and subsequent scanning for the initiator codon. The protein is ATP-dependent RNA helicase eIF4A (tif1) of Sclerotinia sclerotiorum (strain ATCC 18683 / 1980 / Ss-1) (White mold).